A 270-amino-acid polypeptide reads, in one-letter code: 3-methyl-2-oxobutanoate hydroxymethyltransferase (270 aa).

2 residues coordinate Mg(2+): D53 and D92. 3-methyl-2-oxobutanoate is bound by residues 53–54 (DS), D92, and K120. E122 lines the Mg(2+) pocket. The Proton acceptor role is filled by E189.

The protein belongs to the PanB family. Homodecamer; pentamer of dimers. Requires Mg(2+) as cofactor.

The protein resides in the cytoplasm. It catalyses the reaction 3-methyl-2-oxobutanoate + (6R)-5,10-methylene-5,6,7,8-tetrahydrofolate + H2O = 2-dehydropantoate + (6S)-5,6,7,8-tetrahydrofolate. The protein operates within cofactor biosynthesis; (R)-pantothenate biosynthesis; (R)-pantoate from 3-methyl-2-oxobutanoate: step 1/2. Catalyzes the reversible reaction in which hydroxymethyl group from 5,10-methylenetetrahydrofolate is transferred onto alpha-ketoisovalerate to form ketopantoate. The chain is 3-methyl-2-oxobutanoate hydroxymethyltransferase from Saccharophagus degradans (strain 2-40 / ATCC 43961 / DSM 17024).